The following is a 312-amino-acid chain: Pantothenate kinase (312 aa).

G97 to S104 serves as a coordination point for ATP.

Belongs to the prokaryotic pantothenate kinase family.

It localises to the cytoplasm. The catalysed reaction is (R)-pantothenate + ATP = (R)-4'-phosphopantothenate + ADP + H(+). Its pathway is cofactor biosynthesis; coenzyme A biosynthesis; CoA from (R)-pantothenate: step 1/5. The polypeptide is Pantothenate kinase (Mycolicibacterium vanbaalenii (strain DSM 7251 / JCM 13017 / BCRC 16820 / KCTC 9966 / NRRL B-24157 / PYR-1) (Mycobacterium vanbaalenii)).